Here is a 226-residue protein sequence, read N- to C-terminus: MSAPAAEPQAAPSRPTIGVLALQGDVREHLAALRACGAEPVLVRRVGELEAVDGLVLPGGESTAISKLLQVFDLLDPLRARLRDGMPAFGSCAGMILLASEVLDTRPDAQHLSGIDMTVRRNAFGRQVDSFETDLDFAGLDDGPVRAVFIRAPWVERAGDGVQVLATVPDGPSRGRIVAVRQGNVLATSFHPEVTGDLRVHRMFVDIVRAAGDRAGNVHTPDVQPT.

60–62 (GES) lines the L-glutamine pocket. Residue C92 is the Nucleophile of the active site. L-glutamine is bound by residues R121 and 150–151 (IR). Catalysis depends on charge relay system residues H191 and E193.

It belongs to the glutaminase PdxT/SNO family. As to quaternary structure, in the presence of PdxS, forms a dodecamer of heterodimers. Only shows activity in the heterodimer.

The enzyme catalyses aldehydo-D-ribose 5-phosphate + D-glyceraldehyde 3-phosphate + L-glutamine = pyridoxal 5'-phosphate + L-glutamate + phosphate + 3 H2O + H(+). It carries out the reaction L-glutamine + H2O = L-glutamate + NH4(+). It participates in cofactor biosynthesis; pyridoxal 5'-phosphate biosynthesis. In terms of biological role, catalyzes the hydrolysis of glutamine to glutamate and ammonia as part of the biosynthesis of pyridoxal 5'-phosphate. The resulting ammonia molecule is channeled to the active site of PdxS. This chain is Pyridoxal 5'-phosphate synthase subunit PdxT, found in Nocardia farcinica (strain IFM 10152).